The primary structure comprises 194 residues: Acireductone dioxygenase 1 (194 aa).

Positions 1–21 (MEAWYMDDSADDQRKPHHRSP) are disordered. Residues His-87, His-89, Glu-93, and His-132 each coordinate Fe(2+). His-87, His-89, Glu-93, and His-132 together coordinate Ni(2+).

This sequence belongs to the acireductone dioxygenase (ARD) family. Requires Fe(2+) as cofactor. It depends on Ni(2+) as a cofactor.

Its subcellular location is the cytoplasm. It is found in the nucleus. It catalyses the reaction 1,2-dihydroxy-5-(methylsulfanyl)pent-1-en-3-one + O2 = 4-methylsulfanyl-2-oxobutanoate + formate + 2 H(+). The catalysed reaction is 1,2-dihydroxy-5-(methylsulfanyl)pent-1-en-3-one + O2 = 3-(methylsulfanyl)propanoate + CO + formate + 2 H(+). The protein operates within amino-acid biosynthesis; L-methionine biosynthesis via salvage pathway; L-methionine from S-methyl-5-thio-alpha-D-ribose 1-phosphate: step 5/6. Functionally, catalyzes 2 different reactions between oxygen and the acireductone 1,2-dihydroxy-3-keto-5-methylthiopentene (DHK-MTPene) depending upon the metal bound in the active site. Fe-containing acireductone dioxygenase (Fe-ARD) produces formate and 2-keto-4-methylthiobutyrate (KMTB), the alpha-ketoacid precursor of methionine in the methionine recycle pathway. Ni-containing acireductone dioxygenase (Ni-ARD) produces methylthiopropionate, carbon monoxide and formate, and does not lie on the methionine recycle pathway. The chain is Acireductone dioxygenase 1 from Physcomitrium patens (Spreading-leaved earth moss).